A 386-amino-acid chain; its full sequence is Chaperone protein DnaJ (386 aa).

Residues 4-68 (NFYDVLGVSR…QKRQQYDQLG (65 aa)) form the J domain. Composition is skewed to basic and acidic residues over residues 22 to 35 (KAYR…HPDV) and 43 to 79 (ERFK…DKRG). Positions 22 to 132 (KAYRKQAAEH…GGNRPRQGQD (111 aa)) are disordered. 2 stretches are compositionally biased toward gly residues: residues 80-104 (ATGG…GAGG) and 113-125 (FGGG…GGGN). The segment at 147–229 (GATKEVTLTR…CGGDGVVREE (83 aa)) adopts a CR-type zinc-finger fold. The Zn(2+) site is built by Cys160, Cys163, Cys177, Cys180, Cys203, Cys206, Cys217, and Cys220. 4 CXXCXGXG motif repeats span residues 160–167 (CDTCDGAG), 177–184 (CSQCNGRG), 203–210 (CPRCEGSG), and 217–224 (CADCGGDG).

Belongs to the DnaJ family. Homodimer. Zn(2+) is required as a cofactor.

It is found in the cytoplasm. Functionally, participates actively in the response to hyperosmotic and heat shock by preventing the aggregation of stress-denatured proteins and by disaggregating proteins, also in an autonomous, DnaK-independent fashion. Unfolded proteins bind initially to DnaJ; upon interaction with the DnaJ-bound protein, DnaK hydrolyzes its bound ATP, resulting in the formation of a stable complex. GrpE releases ADP from DnaK; ATP binding to DnaK triggers the release of the substrate protein, thus completing the reaction cycle. Several rounds of ATP-dependent interactions between DnaJ, DnaK and GrpE are required for fully efficient folding. Also involved, together with DnaK and GrpE, in the DNA replication of plasmids through activation of initiation proteins. The sequence is that of Chaperone protein DnaJ from Halorubrum lacusprofundi (strain ATCC 49239 / DSM 5036 / JCM 8891 / ACAM 34).